The following is a 213-amino-acid chain: MGNALRKGKFEGWAAVRERMRRTRTFPESEPCAPGVGQISRELAARGGIPSSHTPQNNAALAFLESHQEEEVGFPVAPQVPLRPMTYKGAFDLSFFLKEKGGLEGLIYSHKRAEILDLWVYNTQGFFPDWQNYTPGPGTRFPLTFGWLFKLVPVSEEEAERLGNTCERANLLHPACAHGFEDTHKEILMWKFDRSLGNTHVAMITHPELFQKD.

Gly2 is lipidated: N-myristoyl glycine; by host. Residues 68 to 71 (QEEE) form an acidic; interacts with host PACS1 and PACS2; stabilizes the interaction of NEF/MHC-I with host AP1M1; necessary for MHC-I internalization region. The tract at residues 75–84 (PVAPQVPLRP) is SH3-binding; interaction with Src family tyrosine kinases. The PxxP; stabilizes the interaction of NEF/MHC-I with host AP1M1; necessary for MHC-I internalization signature appears at 78–81 (PQVP). Residues 114–130 (EILDLWVYNTQGFFPDW) are mediates dimerization, Nef-PTE1 interaction. Residues 154–187 (VSEEEAERLGNTCERANLLHPACAHGFEDTHKEI) form a binding to ATP6V1H region. A Dileucine internalization motif; necessary for CD4 internalization motif is present at residues 171-172 (LL). A Diacidic; necessary for CD4 internalization motif is present at residues 181–182 (ED).

Belongs to the lentivirus primate group Nef protein family. Monomer; cytosolic form. Homodimer; membrane bound form. Interacts with Nef associated p21-activated kinase (PAK2); this interaction activates PAK2. Associates with the Nef-MHC-I-AP1 complex; this complex is required for MHC-I internalization. Interacts (via C-terminus) with host PI3-kinase. Interacts with host PACS1; this interaction seems to be weak. Interacts with host PACS2. Interacts with host LCK and MAPK3; these interactions inhibit the kinase activity of the latter. Interacts with host ATP6V1H; this interaction may play a role in CD4 endocytosis. Associates with the CD4-Nef-AP2 complex; this complex is required for CD4 internalization. Interacts with host AP2 subunit alpha and AP2 subunit sigma2. Interacts with TCR-zeta chain; this interaction up-regulates the Fas ligand (FasL) surface expression. Interacts with host HCK, LYN, and SRC; these interactions activate the Src family kinases. Interacts with MAP3K5; this interaction inhibits the Fas and TNFR-mediated death signals. Interacts with beta-COP and PTE1. Interacts with human RACK1; this increases Nef phosphorylation by PKC. Interacts with TP53; this interaction decreases the half-life of TP53, protecting the infected cell against p53-mediated apoptosis. In terms of processing, the virion-associated Nef proteins are cleaved by the viral protease to release the soluble C-terminal core protein. Nef is probably cleaved concomitantly with viral structural proteins on maturation of virus particles. Post-translationally, myristoylated. Phosphorylated on serine residues, probably by host PKCdelta and theta.

It is found in the host cell membrane. Its subcellular location is the virion. The protein resides in the secreted. The protein localises to the host Golgi apparatus membrane. Functionally, factor of infectivity and pathogenicity, required for optimal virus replication. Alters numerous pathways of T-lymphocyte function and down-regulates immunity surface molecules in order to evade host defense and increase viral infectivity. Alters the functionality of other immunity cells, like dendritic cells, monocytes/macrophages and NK cells. In terms of biological role, in infected CD4(+) T-lymphocytes, down-regulates the surface MHC-I, mature MHC-II, CD4, CD28, CCR5 and CXCR4 molecules. Mediates internalization and degradation of host CD4 through the interaction of with the cytoplasmic tail of CD4, the recruitment of AP-2 (clathrin adapter protein complex 2), internalization through clathrin coated pits, and subsequent transport to endosomes and lysosomes for degradation. Diverts host MHC-I molecules to the trans-Golgi network-associated endosomal compartments by an endocytic pathway to finally target them for degradation. MHC-I down-regulation may involve AP-1 (clathrin adapter protein complex 1) or possibly Src family kinase-ZAP70/Syk-PI3K cascade recruited by PACS2. In consequence infected cells are masked for immune recognition by cytotoxic T-lymphocytes. Decreasing the number of immune receptors also prevents reinfection by more HIV particles (superinfection). Down-regulates host SERINC3 and SERINC5 thereby excluding these proteins from the viral particles. Virion infectivity is drastically higher when SERINC3 or SERINC5 are excluded from the viral envelope, because these host antiviral proteins impair the membrane fusion event necessary for subsequent virion penetration. Bypasses host T-cell signaling by inducing a transcriptional program nearly identical to that of anti-CD3 cell activation. Interaction with TCR-zeta chain up-regulates the Fas ligand (FasL). Increasing surface FasL molecules and decreasing surface MHC-I molecules on infected CD4(+) cells send attacking cytotoxic CD8+ T-lymphocytes into apoptosis. Its function is as follows. Plays a role in optimizing the host cell environment for viral replication without causing cell death by apoptosis. Protects the infected cells from apoptosis in order to keep them alive until the next virus generation is ready to strike. Inhibits the Fas and TNFR-mediated death signals by blocking MAP3K5/ASK1. Decreases the half-life of TP53, protecting the infected cell against p53-mediated apoptosis. Inhibits the apoptotic signals regulated by the Bcl-2 family proteins through the formation of a Nef/PI3-kinase/PAK2 complex that leads to activation of PAK2 and induces phosphorylation of host BAD. Functionally, extracellular Nef protein targets CD4(+) T-lymphocytes for apoptosis by interacting with CXCR4 surface receptors. The sequence is that of Protein Nef from Human immunodeficiency virus type 1 group O (isolate ANT70) (HIV-1).